The following is a 193-amino-acid chain: dCTP deaminase (193 aa).

Residues 110–115 (RSSLAR), Asp-128, 136–138 (VLE), Tyr-171, Lys-178, and Gln-182 contribute to the dCTP site. Residue Glu-138 is the Proton donor/acceptor of the active site. Residues 169–193 (RPYNRREDAKYRNQQGAVASRIDKD) are disordered.

It belongs to the dCTP deaminase family. As to quaternary structure, homotrimer.

It carries out the reaction dCTP + H2O + H(+) = dUTP + NH4(+). Its pathway is pyrimidine metabolism; dUMP biosynthesis; dUMP from dCTP (dUTP route): step 1/2. Its function is as follows. Catalyzes the deamination of dCTP to dUTP. In Sodalis glossinidius (strain morsitans), this protein is dCTP deaminase.